The primary structure comprises 273 residues: Chondrolectin (273 aa).

An N-terminal signal peptide occupies residues M1–C21. Residues R22–N216 lie on the Extracellular side of the membrane. The region spanning F35 to K179 is the C-type lectin domain. 2 cysteine pairs are disulfide-bonded: C61/C178 and C144/C170. N86 is a glycosylation site (N-linked (GlcNAc...) asparagine). A helical membrane pass occupies residues L217 to T237. Residues C238–V273 lie on the Cytoplasmic side of the membrane. The segment at G248–V273 is disordered. Over residues K251–K263 the composition is skewed to polar residues.

As to quaternary structure, interacts with RABGGTB. N-glycosylated. As to expression, found in spleen, testis, prostate and fetal liver. Expression limited to vascular muscle of testis, smooth muscle of prostate stroma, heart muscle, skeletal muscle, crypts of small intestine, and red pulp of spleen. B lymphocytes express isoform 2 only; peripheral blood T lymphocytes express isoform 3 only; granulocytes and monocytes express neither isoform 2 nor isoform 3. During development of T lymphocytes, bone marrow progenitor cells express isoform 2 only; thymocytes at different stages of maturation express predominantly isoform 2 and weakly isoform 3, and mature thymocytes express only isoform 2.

The protein resides in the cytoplasm. Its subcellular location is the membrane. The protein localises to the endoplasmic reticulum. It localises to the endoplasmic reticulum membrane. May play a role in the development of the nervous system such as in neurite outgrowth and elongation. May be involved in motor axon growth and guidance. In Homo sapiens (Human), this protein is Chondrolectin (CHODL).